A 350-amino-acid chain; its full sequence is HTH-type DNA-binding transcriptional activator EutR (350 aa).

An HTH araC/xylS-type domain is found at 243–344 (SRAREYVLEN…AEKPSLTLHQ (102 aa)). 2 DNA-binding regions (H-T-H motif) span residues 260–281 (LDLCNQLHVSRRTLQNAFHAIL) and 311–334 (VKDAAMQWGFWHLGQFATDYQQLF).

Its pathway is amine and polyamine degradation; ethanolamine degradation. In terms of biological role, activates the transcription of the eut operon, allowing utilization of ethanolamine (EA). Positively regulates its own transcription. Probably binds EA and vitamin B12 as effectors. Competes with ethanolamine ammonia-lysase (EAL, the first enzyme in the EA degradation pathway) for adenosylcobalamin. Ethanolamine-associated signaling mediated via this protein, but not EA degradation, impacts S.typhimurium survival within macrophages. Binds the promoter of ssrB and eutS in vitro; in mouse infection models binding to ssrB probably induces all 4 operons of pathogenicity island SPI-2. Its function is as follows. Expression of the eut operon allows this bacteria to use ethanolamine (EA) as a carbon, nitrogen and energy source. It relies on cobalamin (vitamin B12) both as a cofactor for the ethanolamine ammonia-lyase (EAL) activity and to induce the operon. EA enhances bacterial survival in macrophages in a concentration-dependent manner, suggesting it is an important nutrient in infection. This is HTH-type DNA-binding transcriptional activator EutR from Salmonella typhimurium (strain LT2 / SGSC1412 / ATCC 700720).